The primary structure comprises 317 residues: Protoheme IX farnesyltransferase (317 aa).

The next 6 helical transmembrane spans lie at 25–45 (FFAL…LVGM), 54–74 (PVIG…SGCL), 117–137 (LMLG…TIVF), 167–189 (IGQA…IIFI), 244–264 (LGFG…AMLV), and 281–301 (AAMS…SALL).

Belongs to the UbiA prenyltransferase family. Protoheme IX farnesyltransferase subfamily.

Its subcellular location is the cell inner membrane. It catalyses the reaction heme b + (2E,6E)-farnesyl diphosphate + H2O = Fe(II)-heme o + diphosphate. The protein operates within porphyrin-containing compound metabolism; heme O biosynthesis; heme O from protoheme: step 1/1. In terms of biological role, converts heme B (protoheme IX) to heme O by substitution of the vinyl group on carbon 2 of heme B porphyrin ring with a hydroxyethyl farnesyl side group. This chain is Protoheme IX farnesyltransferase, found in Methylobacterium nodulans (strain LMG 21967 / CNCM I-2342 / ORS 2060).